A 128-amino-acid chain; its full sequence is Phosphoribosyl-AMP cyclohydrolase (128 aa).

Residue D79 coordinates Mg(2+). C80 is a Zn(2+) binding site. Residues D81 and D83 each contribute to the Mg(2+) site. Zn(2+) contacts are provided by C97 and C104.

Belongs to the PRA-CH family. As to quaternary structure, homodimer. Mg(2+) is required as a cofactor. Requires Zn(2+) as cofactor.

It is found in the cytoplasm. It carries out the reaction 1-(5-phospho-beta-D-ribosyl)-5'-AMP + H2O = 1-(5-phospho-beta-D-ribosyl)-5-[(5-phospho-beta-D-ribosylamino)methylideneamino]imidazole-4-carboxamide. It functions in the pathway amino-acid biosynthesis; L-histidine biosynthesis; L-histidine from 5-phospho-alpha-D-ribose 1-diphosphate: step 3/9. Catalyzes the hydrolysis of the adenine ring of phosphoribosyl-AMP. The protein is Phosphoribosyl-AMP cyclohydrolase of Saccharophagus degradans (strain 2-40 / ATCC 43961 / DSM 17024).